We begin with the raw amino-acid sequence, 334 residues long: Protein-methionine-sulfoxide reductase catalytic subunit MsrP (334 aa).

Positions 1–44 (MKKKQFLKESDVTAESVFFMKRRQVLKALGISAAALSLPHAAHA) form a signal peptide, tat-type signal. Mo-molybdopterin contacts are provided by residues Asn-88, 91-92 (YE), Cys-146, Thr-181, Asn-233, Arg-238, and 249-251 (GIK).

The protein belongs to the MsrP family. In terms of assembly, heterodimer of a catalytic subunit (MsrP) and a heme-binding subunit (MsrQ). Mo-molybdopterin serves as cofactor. Post-translationally, predicted to be exported by the Tat system. The position of the signal peptide cleavage has not been experimentally proven.

The protein resides in the periplasm. It carries out the reaction L-methionyl-[protein] + a quinone + H2O = L-methionyl-(S)-S-oxide-[protein] + a quinol. The catalysed reaction is L-methionyl-[protein] + a quinone + H2O = L-methionyl-(R)-S-oxide-[protein] + a quinol. Part of the MsrPQ system that repairs oxidized periplasmic proteins containing methionine sulfoxide residues (Met-O), using respiratory chain electrons. Thus protects these proteins from oxidative-stress damage caused by reactive species of oxygen and chlorine generated by the host defense mechanisms. MsrPQ is essential for the maintenance of envelope integrity under bleach stress, rescuing a wide series of structurally unrelated periplasmic proteins from methionine oxidation, including the primary periplasmic chaperone SurA and the lipoprotein Pal. The catalytic subunit MsrP is non-stereospecific, being able to reduce both (R-) and (S-) diastereoisomers of methionine sulfoxide. The protein is Protein-methionine-sulfoxide reductase catalytic subunit MsrP of Escherichia coli O139:H28 (strain E24377A / ETEC).